Consider the following 591-residue polypeptide: Homeobox domain-containing transcription factor HOB1 (591 aa).

Residues 1–15 are compositionally biased toward basic and acidic residues; that stretch reads MEGKNEDMHTPRGPE. Disordered stretches follow at residues 1-37 and 148-168; these read MEGKNEDMHTPRGPEDASNIADEYPSPERQQQGDMLG and IAGPSTLRRSPLPDTFSRSPA. A DNA-binding region (homeobox) is located at residues 176–223; sequence IAILRESYARNPNPDRKELERLAARTGRPWNKIREYFRQRRNKLRGLE. 2 disordered regions span residues 420–463 and 543–563; these read DAGL…PRES and DAIERRNAGESKRKRDDALTE. Residues 427–441 are compositionally biased toward acidic residues; that stretch reads QGEEDQPPTVEESDQ. The segment covering 543 to 560 has biased composition (basic and acidic residues); sequence DAIERRNAGESKRKRDDA.

The protein localises to the nucleus. General stress-responsive transcription factor that governs multiple stress responses and adaptations. Plays a key role in virulence. Mediates the expression of LAC1, which is the major laccase involved in melanin synthesis. Positively regulates BZP4 induction under conditions of nutrient starvation and basal expression levels of MBS1 and USV101, 3 major transcription factors that independently contribute to melanin production. Also acts as a key regulator of ergosterol gene expression. This is Homeobox domain-containing transcription factor HOB1 from Cryptococcus neoformans var. grubii serotype A (strain H99 / ATCC 208821 / CBS 10515 / FGSC 9487) (Filobasidiella neoformans var. grubii).